The sequence spans 103 residues: Putative protein YmfH (103 aa).

Residues 1-34 (MVNAAQRTRVKVEADNRPSVDTHPPGVQPSPGTG) form a disordered region. The segment covering 10–20 (VKVEADNRPSV) has biased composition (basic and acidic residues). A run of 2 helical transmembrane segments spans residues 42-62 (MLCVVLAVPVFSLVLSGTALF) and 73-93 (GLITRPILIAVATGALLCFVE).

Its subcellular location is the cell inner membrane. The chain is Putative protein YmfH (ymfH) from Escherichia coli (strain K12).